The chain runs to 919 residues: Chaperone protein ClpC2, chloroplastic (919 aa).

The transit peptide at 1 to 54 (MAGTLLQPVALGTTFAGRVSGQRWKSHGTRRPPSMLAMSLSRPVKMAAFVGLRS) directs the protein to the chloroplast. In terms of domain architecture, Clp R spans 89–231 (FERFTEKAIK…RTQVIRMIGE (143 aa)). Repeat regions lie at residues 92–157 (FTEK…IGRG) and 167–231 (FTPR…MIGE). The i stretch occupies residues 252–499 (LEEYGTNLTK…RVRLRHAQVP (248 aa)). 297–304 (GEPGVGKT) is an ATP binding site. In terms of domain architecture, UVR spans 506 to 541 (DKELKQITKDKNEAVRSQDFEKAGELRDREMELKAQ). The segment at 566 to 757 (VNEADIQHIV…LLIMTSNVGS (192 aa)) is II. 640 to 647 (GPTGVGKS) provides a ligand contact to ATP.

This sequence belongs to the ClpA/ClpB family. ClpC subfamily.

It localises to the plastid. The protein resides in the chloroplast. Functionally, molecular chaperone that may interact with a ClpP-like protease involved in degradation of denatured proteins in the chloroplast. This is Chaperone protein ClpC2, chloroplastic (CLPC2) from Oryza sativa subsp. japonica (Rice).